We begin with the raw amino-acid sequence, 564 residues long: Rhotekin (564 aa).

Residue R14 is modified to Omega-N-methylarginine. The REM-1 domain occupies 17 to 98 (ALEMEFKRGR…LQRRKEAQVL (82 aa)). 2 positions are modified to phosphoserine: S30 and S106. Residue R230 is modified to Asymmetric dimethylarginine. Phosphoserine is present on S232. One can recognise a PH domain in the interval 309-416 (QPTASGALRV…WMEALWQLFF (108 aa)). Residues 518–564 (TFSLDAAPADHSLGPSRSVAPLPPQRSPKSRGFYSKSQLGPWLQSPV) form a disordered region. A phosphoserine mark is found at S520, S529, and S544.

As to quaternary structure, interacts via its C-terminal region with the TAX1BP3 PDZ domain. This interaction facilitates Rho-mediated activation of the c-Fos serum response element (SRE). Interacts with SEPT9. Specifically binds to GTP-bound RHOA, RHOB and RHOC and inhibits their GTPase activity. As to expression, abundantly expressed in brain and kidney. Weakly expressed in lung, testis, skeletal muscle, heart and thymus.

Functionally, mediates Rho signaling to activate NF-kappa-B and may confer increased resistance to apoptosis to cells in gastric tumorigenesis. May play a novel role in the organization of septin structures. The protein is Rhotekin of Mus musculus (Mouse).